A 598-amino-acid chain; its full sequence is MVRDRVIELFRKALAQGADDGRWPAAGAGFSVEAPRDPKHGDFAVNAAMVLAKQAGRPPRELAQAIVEAVRAADTAGDLAGLEIAGPGFINVRLSPDLWLRTLARAVAEGPDYGRTAVGQGKKVIVEYVSANPTGPMHVGHGRNAVVGDGVQGLLRWAGFDVTREYYVNDYGAQVQTLARSVHLRYQELHGRTVTMPPKSYPGEYVKDIAAGLKAEYGARFLDAPEAEWLTLFRDHSVQHVLGMIRGDLAAVNISFDRWSSEKALYESGTVDRFLRFLEEKDLVYVGKLPPPKSKKGQPPPQPQPDEEGVTAAEDLTLFRSSAYGDEVDRPVKKADGTPTYFCADIAYHWDKRQRADALVDVLGADHGGYVPRLEAAMEALGASRKDLHVVLIQMVSLMRGGESVKMSKRAGTLVSLREVVDEVGRDATRFIFLTRRSDAPLDFDVELAKRQTLDNPVFYVQYGHARLAAIFQKAREAGHAVPDFDLEAARTLASPEEQDLIRRIAAFPDMLAAAALAYEPHRVAFYLQETIAAFHSWYTQGKKSGEKVIGPDPVKTAARLFLCRALKQVLANGLAVLGVSAPDRMESPETRDIADDV.

The 'HIGH' region motif lies at 131-141 (ANPTGPMHVGH). The tract at residues 288-309 (KLPPPKSKKGQPPPQPQPDEEG) is disordered.

It belongs to the class-I aminoacyl-tRNA synthetase family. Monomer.

It localises to the cytoplasm. The enzyme catalyses tRNA(Arg) + L-arginine + ATP = L-arginyl-tRNA(Arg) + AMP + diphosphate. The polypeptide is Arginine--tRNA ligase (Anaeromyxobacter dehalogenans (strain 2CP-1 / ATCC BAA-258)).